Reading from the N-terminus, the 388-residue chain is L-lactate dehydrogenase (388 aa).

Positions 1–380 (MIISAASDYR…SADALSRVTR (380 aa)) constitute an FMN hydroxy acid dehydrogenase domain. Tyr-24 is a substrate binding site. Residues Ser-106 and Gln-127 each coordinate FMN. Tyr-129 is a binding site for substrate. Residue Thr-155 coordinates FMN. Arg-164 serves as a coordination point for substrate. Residue Lys-251 coordinates FMN. His-275 serves as the catalytic Proton acceptor. Arg-278 is a binding site for substrate. 306–330 (DSGIRSGLDVVRMLALGADAVLLGR) is an FMN binding site.

The protein belongs to the FMN-dependent alpha-hydroxy acid dehydrogenase family. Requires FMN as cofactor.

The protein localises to the cell inner membrane. The enzyme catalyses (S)-lactate + A = pyruvate + AH2. Catalyzes the conversion of L-lactate to pyruvate. Is coupled to the respiratory chain. In Xanthomonas axonopodis pv. citri (strain 306), this protein is L-lactate dehydrogenase.